A 914-amino-acid chain; its full sequence is Polyribonucleotide nucleotidyltransferase (914 aa).

The tract at residues 407 to 427 (YMHNYEMPPYSTGETGRVGSP) is disordered. Residues D521 and D527 each contribute to the Mg(2+) site. The 60-residue stretch at 587-646 (PRIITTSVPVEKIGEVIGPKGKMINQIQEDTGAEIAIEDDGTVFISSEGGEAAKKAKSII) folds into the KH domain. Residues 658–730 (GETYNGKVVK…DRGKISLAIP (73 aa)) enclose the S1 motif domain. The segment at 727 to 914 (LAIPGFEDQE…VRRDFDPFED (188 aa)) is disordered. Composition is skewed to basic and acidic residues over residues 742-789 (SRGD…RRSD), 797-865 (DRPR…DRRG), and 873-899 (RGSD…ERTE).

The protein belongs to the polyribonucleotide nucleotidyltransferase family. Mg(2+) serves as cofactor.

Its subcellular location is the cytoplasm. The enzyme catalyses RNA(n+1) + phosphate = RNA(n) + a ribonucleoside 5'-diphosphate. In terms of biological role, involved in mRNA degradation. Catalyzes the phosphorolysis of single-stranded polyribonucleotides processively in the 3'- to 5'-direction. In Bifidobacterium longum subsp. infantis (strain ATCC 15697 / DSM 20088 / JCM 1222 / NCTC 11817 / S12), this protein is Polyribonucleotide nucleotidyltransferase.